Reading from the N-terminus, the 240-residue chain is Fatty acid metabolism regulator protein (240 aa).

The region spanning 6-74 is the HTH gntR-type domain; that stretch reads KGPASFAEKY…HGKPTRVNNF (69 aa). The segment at residues 34 to 53 is a DNA-binding region (H-T-H motif); the sequence is ERELSELIGVTRTTLREVLQ.

As to quaternary structure, homodimer.

Its subcellular location is the cytoplasm. In terms of biological role, multifunctional regulator of fatty acid metabolism. This Shewanella oneidensis (strain ATCC 700550 / JCM 31522 / CIP 106686 / LMG 19005 / NCIMB 14063 / MR-1) protein is Fatty acid metabolism regulator protein.